A 243-amino-acid chain; its full sequence is Type III pantothenate kinase (243 aa).

Residue 7 to 14 (DIGNTRLK) participates in ATP binding. Substrate contacts are provided by residues Tyr-95 and 102–105 (GIDR). Asp-104 acts as the Proton acceptor in catalysis. Residue Thr-126 participates in ATP binding. Residue Thr-177 coordinates substrate.

It belongs to the type III pantothenate kinase family. Homodimer. NH4(+) serves as cofactor. K(+) is required as a cofactor.

It is found in the cytoplasm. It carries out the reaction (R)-pantothenate + ATP = (R)-4'-phosphopantothenate + ADP + H(+). The protein operates within cofactor biosynthesis; coenzyme A biosynthesis; CoA from (R)-pantothenate: step 1/5. Functionally, catalyzes the phosphorylation of pantothenate (Pan), the first step in CoA biosynthesis. The protein is Type III pantothenate kinase of Acinetobacter baylyi (strain ATCC 33305 / BD413 / ADP1).